Here is a 279-residue protein sequence, read N- to C-terminus: Ultraviolet N-glycosylase/AP lyase (279 aa).

One can recognise a HhH domain in the interval 123–142; that stretch reads LEDLVALPGVGRKTAFVVLG. Positions 203, 210, 213, and 219 each coordinate [4Fe-4S] cluster. The interval 256 to 279 is disordered; sequence TAGAAGPRPRAGGXAPGLPAQPFR.

Belongs to the Nth/MutY family. [4Fe-4S] cluster is required as a cofactor.

DNA repair enzyme that has both DNA N-glycosylase activity and AP-lyase activity. Initiates repair at cis-syn pyrimidine dimers. Proceeds via an imino enzyme:DNA intermediate. The polypeptide is Ultraviolet N-glycosylase/AP lyase (pdg) (Micrococcus luteus (strain ATCC 4698 / DSM 20030 / JCM 1464 / CCM 169 / CCUG 5858 / IAM 1056 / NBRC 3333 / NCIMB 9278 / NCTC 2665 / VKM Ac-2230) (Micrococcus lysodeikticus)).